The following is a 756-amino-acid chain: Conserved oligomeric Golgi complex subunit 2 (756 aa).

Positions 62 to 82 form a coiled coil; it reads RSELRSHLASLNRELVDLINR. Positions 173–199 are disordered; sequence WQNEDANSMGRSSMNDENSTQQDGTTM.

Belongs to the COG2 family. Homodimer. Component of the conserved oligomeric Golgi complex which is composed of eight different subunits and is required for normal Golgi morphology and localization. Binds to COG3 and COG4. Interacts with FPP3/VETH1 and FPP2/VETH2; this interaction promotes the association between cortical microtubules and EXO70A1. Binds to SEC15B, and, possibly, with EXO70A1, SEC3A and SEC10A.

The protein localises to the golgi apparatus membrane. Required for normal Golgi morphology and function. Ensures, when in complex with FPP3/VETH1 and FPP2/VETH2, the correct secondary cell wall (SCW) deposition pattern by recruiting exocyst components to cortical microtubules in xylem cells during secondary cell wall deposition. The polypeptide is Conserved oligomeric Golgi complex subunit 2 (Arabidopsis thaliana (Mouse-ear cress)).